The primary structure comprises 313 residues: MSYASEVKKELTGITVHRDNAKAELMALIRMNGSIGIADHQLVLNVQTENPAIARRIYSLLKQFYGVESEIVVRRKMKLKKNNQYIVRLRYHAQHVLDDLGILQNYQIKEQVPVELLKDEWMVRSYLRGAFLAGGSVNNPETSRYHLEIYSLYEEHNEIIAQMMNKFGLNAQTTARRSGFIVYLKEAEKIANFMSLIGATNSMLQFENVRIVRDMRNSVNRLVNCENANLNKIANASTRQIENIEFIDSRVGLSSLPDKLREIAETRLAHQEVSLKELGELVPGGPISKSGVNHRLRKLNAYADELRASEVKQ.

The segment at residues 274–308 (SLKELGELVPGGPISKSGVNHRLRKLNAYADELRA) is a DNA-binding region (H-T-H motif).

It belongs to the WhiA family.

Involved in cell division and chromosome segregation. The polypeptide is Probable cell division protein WhiA (Limosilactobacillus reuteri subsp. reuteri (strain JCM 1112) (Lactobacillus reuteri)).